We begin with the raw amino-acid sequence, 88 residues long: Small ribosomal subunit protein bS20 (88 aa).

Belongs to the bacterial ribosomal protein bS20 family.

Its function is as follows. Binds directly to 16S ribosomal RNA. This Bradyrhizobium diazoefficiens (strain JCM 10833 / BCRC 13528 / IAM 13628 / NBRC 14792 / USDA 110) protein is Small ribosomal subunit protein bS20.